A 264-amino-acid chain; its full sequence is tRNA pseudouridine synthase A (264 aa).

Asp51 functions as the Nucleophile in the catalytic mechanism. Tyr109 provides a ligand contact to substrate.

The protein belongs to the tRNA pseudouridine synthase TruA family. Homodimer.

The catalysed reaction is uridine(38/39/40) in tRNA = pseudouridine(38/39/40) in tRNA. In terms of biological role, formation of pseudouridine at positions 38, 39 and 40 in the anticodon stem and loop of transfer RNAs. The polypeptide is tRNA pseudouridine synthase A (Polaromonas sp. (strain JS666 / ATCC BAA-500)).